The primary structure comprises 315 residues: Holliday junction branch migration complex subunit RuvB (315 aa).

Residues 1 to 168 (MAKKQEIRPK…FGLIGQISNY (168 aa)) form a large ATPase domain (RuvB-L) region. Residues Ile-7, Arg-8, Gly-49, Lys-52, Thr-53, Ser-54, 115 to 117 (EDF), Arg-158, Tyr-168, and Arg-205 each bind ATP. Thr-53 serves as a coordination point for Mg(2+). Residues 169–239 (QVEDIEKIIK…LVNKTLKQLG (71 aa)) are small ATPAse domain (RuvB-S). The tract at residues 242-315 (ENGLNESQVK…QKGISYLERI (74 aa)) is head domain (RuvB-H). Positions 297 and 302 each coordinate DNA.

It belongs to the RuvB family. Homohexamer. Forms an RuvA(8)-RuvB(12)-Holliday junction (HJ) complex. HJ DNA is sandwiched between 2 RuvA tetramers; dsDNA enters through RuvA and exits via RuvB. An RuvB hexamer assembles on each DNA strand where it exits the tetramer. Each RuvB hexamer is contacted by two RuvA subunits (via domain III) on 2 adjacent RuvB subunits; this complex drives branch migration. In the full resolvosome a probable DNA-RuvA(4)-RuvB(12)-RuvC(2) complex forms which resolves the HJ.

Its subcellular location is the cytoplasm. The catalysed reaction is ATP + H2O = ADP + phosphate + H(+). Its function is as follows. The RuvA-RuvB-RuvC complex processes Holliday junction (HJ) DNA during genetic recombination and DNA repair, while the RuvA-RuvB complex plays an important role in the rescue of blocked DNA replication forks via replication fork reversal (RFR). RuvA specifically binds to HJ cruciform DNA, conferring on it an open structure. The RuvB hexamer acts as an ATP-dependent pump, pulling dsDNA into and through the RuvAB complex. RuvB forms 2 homohexamers on either side of HJ DNA bound by 1 or 2 RuvA tetramers; 4 subunits per hexamer contact DNA at a time. Coordinated motions by a converter formed by DNA-disengaged RuvB subunits stimulates ATP hydrolysis and nucleotide exchange. Immobilization of the converter enables RuvB to convert the ATP-contained energy into a lever motion, pulling 2 nucleotides of DNA out of the RuvA tetramer per ATP hydrolyzed, thus driving DNA branch migration. The RuvB motors rotate together with the DNA substrate, which together with the progressing nucleotide cycle form the mechanistic basis for DNA recombination by continuous HJ branch migration. Branch migration allows RuvC to scan DNA until it finds its consensus sequence, where it cleaves and resolves cruciform DNA. This chain is Holliday junction branch migration complex subunit RuvB, found in Mycoplasmopsis pulmonis (strain UAB CTIP) (Mycoplasma pulmonis).